The primary structure comprises 239 residues: Tetraspanin-9 (239 aa).

Topologically, residues 1–13 (MARGCLCCLKYMM) are cytoplasmic. The chain crosses the membrane as a helical span at residues 14–34 (FLFNLIFWLCGCGLLGVGIWL). The Extracellular portion of the chain corresponds to 35-55 (SVSQGNFATFSPSFPSLSAAN). Residues 56 to 76 (LVIAIGTIVMVTGFLGCLGAI) traverse the membrane as a helical segment. Topologically, residues 77–85 (KENKCLLLS) are cytoplasmic. A helical membrane pass occupies residues 86-106 (FFIVLLVILLAELILLILFFV). Residues 107 to 203 (YMDKVNENAK…VKMWFDDNKH (97 aa)) lie on the Extracellular side of the membrane. A glycan (N-linked (GlcNAc...) asparagine) is linked at asparagine 180. Residues 204-224 (VLGTVGMCILIMQILGMAFSM) traverse the membrane as a helical segment. The Cytoplasmic segment spans residues 225–239 (TLFQHIHRTGKKYDA).

It belongs to the tetraspanin (TM4SF) family. Found in a complex with GP6. Glycosylated. In terms of tissue distribution, expressed in megakaryocytes and platelets (at protein level).

The protein localises to the membrane. This Homo sapiens (Human) protein is Tetraspanin-9 (TSPAN9).